A 430-amino-acid polypeptide reads, in one-letter code: Serine--tRNA ligase (430 aa).

Thr-237–Glu-239 lines the L-serine pocket. Arg-268 to Glu-270 contributes to the ATP binding site. Glu-291 provides a ligand contact to L-serine. Glu-355–Ser-358 contributes to the ATP binding site. Ser-391 provides a ligand contact to L-serine.

The protein belongs to the class-II aminoacyl-tRNA synthetase family. Type-1 seryl-tRNA synthetase subfamily. As to quaternary structure, homodimer. The tRNA molecule binds across the dimer.

The protein resides in the cytoplasm. The enzyme catalyses tRNA(Ser) + L-serine + ATP = L-seryl-tRNA(Ser) + AMP + diphosphate + H(+). The catalysed reaction is tRNA(Sec) + L-serine + ATP = L-seryl-tRNA(Sec) + AMP + diphosphate + H(+). It participates in aminoacyl-tRNA biosynthesis; selenocysteinyl-tRNA(Sec) biosynthesis; L-seryl-tRNA(Sec) from L-serine and tRNA(Sec): step 1/1. Functionally, catalyzes the attachment of serine to tRNA(Ser). Is also able to aminoacylate tRNA(Sec) with serine, to form the misacylated tRNA L-seryl-tRNA(Sec), which will be further converted into selenocysteinyl-tRNA(Sec). The sequence is that of Serine--tRNA ligase from Klebsiella pneumoniae (strain 342).